Consider the following 357-residue polypeptide: S-adenosylmethionine:tRNA ribosyltransferase-isomerase (357 aa).

This sequence belongs to the QueA family. In terms of assembly, monomer.

It is found in the cytoplasm. The enzyme catalyses 7-aminomethyl-7-carbaguanosine(34) in tRNA + S-adenosyl-L-methionine = epoxyqueuosine(34) in tRNA + adenine + L-methionine + 2 H(+). It participates in tRNA modification; tRNA-queuosine biosynthesis. In terms of biological role, transfers and isomerizes the ribose moiety from AdoMet to the 7-aminomethyl group of 7-deazaguanine (preQ1-tRNA) to give epoxyqueuosine (oQ-tRNA). The sequence is that of S-adenosylmethionine:tRNA ribosyltransferase-isomerase from Phenylobacterium zucineum (strain HLK1).